We begin with the raw amino-acid sequence, 118 residues long: Large ribosomal subunit protein bL20 (118 aa).

It belongs to the bacterial ribosomal protein bL20 family.

In terms of biological role, binds directly to 23S ribosomal RNA and is necessary for the in vitro assembly process of the 50S ribosomal subunit. It is not involved in the protein synthesizing functions of that subunit. The chain is Large ribosomal subunit protein bL20 from Klebsiella pneumoniae (strain 342).